The following is a 366-amino-acid chain: Tyrosine--tRNA ligase (366 aa).

Residues tyrosine 41, tyrosine 167, glutamine 171, aspartate 174, and glutamine 189 each coordinate L-tyrosine. Residues 241–245 (KMSKS) carry the 'KMSKS' region motif. Lysine 244 contacts ATP.

Belongs to the class-I aminoacyl-tRNA synthetase family. TyrS type 4 subfamily. As to quaternary structure, homodimer.

It is found in the cytoplasm. The enzyme catalyses tRNA(Tyr) + L-tyrosine + ATP = L-tyrosyl-tRNA(Tyr) + AMP + diphosphate + H(+). Its function is as follows. Catalyzes the attachment of tyrosine to tRNA(Tyr) in a two-step reaction: tyrosine is first activated by ATP to form Tyr-AMP and then transferred to the acceptor end of tRNA(Tyr). The chain is Tyrosine--tRNA ligase from Saccharolobus solfataricus (strain ATCC 35092 / DSM 1617 / JCM 11322 / P2) (Sulfolobus solfataricus).